The primary structure comprises 482 residues: uncharacterized protein (482 aa).

The HTH gntR-type domain maps to 12–80 (LPKYRQIVHF…MGKGTVVINN (69 aa)). Residues 40–59 (QRTLAKDFQVNRSTVITALE) constitute a DNA-binding region (H-T-H motif). K325 is modified (N6-(pyridoxal phosphate)lysine).

In the C-terminal section; belongs to the class-I pyridoxal-phosphate-dependent aminotransferase family. Pyridoxal 5'-phosphate is required as a cofactor.

This is an uncharacterized protein from Bacillus subtilis (strain 168).